We begin with the raw amino-acid sequence, 33 residues long: Cytochrome b6-f complex subunit 8 (33 aa).

Residues 2-22 (LFTLGWASLAAMFSFSIAMVV) form a helical membrane-spanning segment.

It belongs to the PetN family. The 4 large subunits of the cytochrome b6-f complex are cytochrome b6, subunit IV (17 kDa polypeptide, PetD), cytochrome f and the Rieske protein, while the 4 small subunits are PetG, PetL, PetM and PetN. The complex functions as a dimer.

The protein resides in the cellular thylakoid membrane. Its function is as follows. Component of the cytochrome b6-f complex, which mediates electron transfer between photosystem II (PSII) and photosystem I (PSI), cyclic electron flow around PSI, and state transitions. This Synechococcus sp. (strain CC9605) protein is Cytochrome b6-f complex subunit 8.